A 181-amino-acid chain; its full sequence is ATP-dependent protease subunit HslV (181 aa).

The active site involves T7. Residues A166, C169, and T172 each contribute to the Na(+) site.

It belongs to the peptidase T1B family. HslV subfamily. In terms of assembly, a double ring-shaped homohexamer of HslV is capped on each side by a ring-shaped HslU homohexamer. The assembly of the HslU/HslV complex is dependent on binding of ATP.

It is found in the cytoplasm. It carries out the reaction ATP-dependent cleavage of peptide bonds with broad specificity.. Its activity is regulated as follows. Allosterically activated by HslU binding. Functionally, protease subunit of a proteasome-like degradation complex believed to be a general protein degrading machinery. This chain is ATP-dependent protease subunit HslV, found in Anaeromyxobacter dehalogenans (strain 2CP-1 / ATCC BAA-258).